The sequence spans 260 residues: Isoprenyl transferase (260 aa).

The active site involves D40. Residue D40 participates in Mg(2+) binding. Substrate contacts are provided by residues G41–R44, W45, R53, H57, and S85–E87. N88 functions as the Proton acceptor in the catalytic mechanism. Residues W89, R91, R208, and R214–S216 each bind substrate. A Mg(2+)-binding site is contributed by E227.

The protein belongs to the UPP synthase family. Homodimer. Mg(2+) serves as cofactor.

In terms of biological role, catalyzes the condensation of isopentenyl diphosphate (IPP) with allylic pyrophosphates generating different type of terpenoids. This chain is Isoprenyl transferase, found in Bacillus subtilis (strain 168).